The primary structure comprises 102 residues: Virulence plasmid protein pGP4-D (102 aa).

The polypeptide is Virulence plasmid protein pGP4-D (Chlamydia trachomatis serovar L2 (strain ATCC VR-902B / DSM 19102 / 434/Bu)).